Reading from the N-terminus, the 579-residue chain is Capsid vertex component 2 (579 aa).

The interval 1–50 (MTARYGFGSISFPNKCGIFLSTTKNFIAPNFPIHYWTAPAFELRGRMNPD) is interaction with major capsid protein/MCP.

The protein belongs to the herpesviridae CVC2 protein family. As to quaternary structure, heterodimerizes with CVC1. Interacts with major capsid protein/MCP and triplex capsid protein 1/TRX1 at the pentamer vertices. Interacts with the large tegument protein/LTP.

Its subcellular location is the virion. The protein resides in the host nucleus. Functionally, capsid vertex-specific component that plays a role during viral DNA encapsidation, assuring correct genome cleavage and presumably stabilizing capsids that contain full-length viral genomes. Participates in the interaction between the capsid and the tegument through interaction with the large tegument protein/LTP. In Homo sapiens (Human), this protein is Capsid vertex component 2.